The chain runs to 158 residues: Large ribosomal subunit protein uL30 (158 aa).

The protein belongs to the universal ribosomal protein uL30 family. Part of the 50S ribosomal subunit.

This chain is Large ribosomal subunit protein uL30, found in Saccharolobus solfataricus (strain ATCC 35092 / DSM 1617 / JCM 11322 / P2) (Sulfolobus solfataricus).